Consider the following 664-residue polypeptide: Macoilin (664 aa).

A run of 4 helical transmembrane segments spans residues 28 to 48 (TFLY…DFVL), 75 to 95 (AFSV…LLFI), 120 to 140 (VCLP…AIRF), and 154 to 174 (FAAH…KSYV). Positions 253-265 (REKGKEKDKDAKK) are enriched in basic and acidic residues. Positions 253 to 274 (REKGKEKDKDAKKHNLGINNNN) are disordered. Serine 305 bears the Phosphoserine mark. The segment covering 320–348 (KNYKNASGVVNSSPRSHSATNGSIPSSSS) has biased composition (polar residues). Positions 320–375 (KNYKNASGVVNSSPRSHSATNGSIPSSSSKNEKKQKCTSKSPSTHKDLMENCIPNN) are disordered. Asparagine 324 carries an N-linked (GlcNAc...) asparagine glycan. A Phosphoserine modification is found at serine 332. Residues asparagine 340 and asparagine 452 are each glycosylated (N-linked (GlcNAc...) asparagine). The disordered stretch occupies residues 630–664 (TSPLSPVSPHYSSKFVETSPSGLDPNASVYQPLKK). Phosphoserine occurs at positions 631 and 634. A glycan (N-linked (GlcNAc...) asparagine) is linked at asparagine 655.

It belongs to the macoilin family.

The protein localises to the rough endoplasmic reticulum membrane. Its subcellular location is the nucleus membrane. In terms of biological role, plays a role in the regulation of neuronal activity. This Macaca mulatta (Rhesus macaque) protein is Macoilin (MACO1).